A 359-amino-acid chain; its full sequence is Dihydroorotate dehydrogenase (quinone) (359 aa).

FMN contacts are provided by residues 61-65 (AGYDK) and threonine 85. A substrate-binding site is contributed by lysine 65. Residue 110 to 114 (NRLGF) participates in substrate binding. Asparagine 139 and asparagine 170 together coordinate FMN. Position 170 (asparagine 170) interacts with substrate. The Nucleophile role is filled by serine 173. Substrate is bound at residue asparagine 175. FMN-binding residues include lysine 211 and serine 239. Position 240–241 (240–241 (NT)) interacts with substrate. Residues glycine 262, glycine 291, and 312–313 (YT) each bind FMN.

The protein belongs to the dihydroorotate dehydrogenase family. Type 2 subfamily. In terms of assembly, monomer. Requires FMN as cofactor.

The protein localises to the cell membrane. The enzyme catalyses (S)-dihydroorotate + a quinone = orotate + a quinol. It participates in pyrimidine metabolism; UMP biosynthesis via de novo pathway; orotate from (S)-dihydroorotate (quinone route): step 1/1. Catalyzes the conversion of dihydroorotate to orotate with quinone as electron acceptor. The chain is Dihydroorotate dehydrogenase (quinone) from Mesorhizobium japonicum (strain LMG 29417 / CECT 9101 / MAFF 303099) (Mesorhizobium loti (strain MAFF 303099)).